We begin with the raw amino-acid sequence, 120 residues long: Xibalbin-1 (120 aa).

Residues 1-21 (MISKILIAACALLLISHLVLA) form the signal peptide. A propeptide spanning residues 22 to 63 (VPYLEDGLNSLHNRTGESDETRGYTIQLLKEMPEDDAVEDYS) is cleaved from the precursor. 4 disulfides stabilise this stretch: C79-C94, C86-C99, C93-C110, and C101-C108.

Belongs to the xibalbin-1 family. As to expression, expressed by the venom gland. Not found in the whole body.

It localises to the secreted. Its function is as follows. Probable neurotoxin. Strongly inhibits voltage-gated potassium channels (Kv1.1/KCNA1, Kv1.2/KCNA2, Kv1.3/KCNA3, and Kv1.6/KCNA6, with the highest toxicity against Kv1.6 (74% inhibition at 1 uM)) and mildly inhibits sodium channels (Nav1.2/SCN2A, Nav1.4/SCN4A, Nav1.5/SCN5A, Nav1.6/SCN8A, and BgNav). Induces activation of protein kinase A type II (PKA-II) and MAP kinase Erk1/2 in primary nociceptive and non-nociceptive sensory neurons. Does not show cytotoxic activity. Does not have an impact on Ca2+, cAMP, and NO signaling in the cell types analyzed. Does not interfere with the adhesion of leukocytes to endothelial cells. The protein is Xibalbin-1 of Xibalbanus tulumensis (Blind cave remipede).